The chain runs to 223 residues: Protein disulfide-isomerase-like protein EhSep2 (223 aa).

Residues 1–17 (MALRSLTLLCAAAGASA) form the signal peptide. The region spanning 18 to 125 (GAIELTPDNF…DELKKFAENE (108 aa)) is the Thioredoxin domain. A non-standard amino acid (selenocysteine) is located at residue Sec-47. Positions 155–201 (EKRTEMLETLKKELADAESTHEALLKELQATYKESMDKLEKLKEESA) form a coiled coil. A disordered region spans residues 201–223 (APKIKLLKAATPAPKAEGAKDEV). Residues 203-216 (KIKLLKAATPAPKA) are compositionally biased toward low complexity. A Prevents secretion from ER motif is present at residues 220 to 223 (KDEV).

The protein belongs to the protein disulfide isomerase family.

It is found in the endoplasmic reticulum lumen. The sequence is that of Protein disulfide-isomerase-like protein EhSep2 (SEP2) from Emiliania huxleyi (Coccolithophore).